Reading from the N-terminus, the 81-residue chain is Photosystem I iron-sulfur center (81 aa).

2 consecutive 4Fe-4S ferredoxin-type domains span residues 2–31 (SHSV…MVPW) and 39–68 (IASA…VRVY). Positions 11, 14, 17, 21, 48, 51, 54, and 58 each coordinate [4Fe-4S] cluster.

The eukaryotic PSI reaction center is composed of at least 11 subunits. It depends on [4Fe-4S] cluster as a cofactor.

It is found in the plastid. It localises to the chloroplast thylakoid membrane. It catalyses the reaction reduced [plastocyanin] + hnu + oxidized [2Fe-2S]-[ferredoxin] = oxidized [plastocyanin] + reduced [2Fe-2S]-[ferredoxin]. Its function is as follows. Apoprotein for the two 4Fe-4S centers FA and FB of photosystem I (PSI); essential for photochemical activity. FB is the terminal electron acceptor of PSI, donating electrons to ferredoxin. The C-terminus interacts with PsaA/B/D and helps assemble the protein into the PSI complex. Required for binding of PsaD and PsaE to PSI. PSI is a plastocyanin/cytochrome c6-ferredoxin oxidoreductase, converting photonic excitation into a charge separation, which transfers an electron from the donor P700 chlorophyll pair to the spectroscopically characterized acceptors A0, A1, FX, FA and FB in turn. The sequence is that of Photosystem I iron-sulfur center from Nephroselmis olivacea (Green alga).